Here is a 521-residue protein sequence, read N- to C-terminus: GMP synthase [glutamine-hydrolyzing] (521 aa).

The 199-residue stretch at 5–203 (KILILDFGSQ…VHEICGCGND (199 aa)) folds into the Glutamine amidotransferase type-1 domain. Cys82 (nucleophile) is an active-site residue. Active-site residues include His177 and Glu179. The region spanning 204-396 (WNMPDYISEA…LGLPHDMVYR (193 aa)) is the GMPS ATP-PPase domain. An ATP-binding site is contributed by 231 to 237 (SGGVDSS).

In terms of assembly, homodimer.

The enzyme catalyses XMP + L-glutamine + ATP + H2O = GMP + L-glutamate + AMP + diphosphate + 2 H(+). Its pathway is purine metabolism; GMP biosynthesis; GMP from XMP (L-Gln route): step 1/1. In terms of biological role, catalyzes the synthesis of GMP from XMP. This is GMP synthase [glutamine-hydrolyzing] from Azoarcus sp. (strain BH72).